A 494-amino-acid chain; its full sequence is ATP synthase subunit beta (494 aa).

ATP is bound at residue 177 to 184 (GGAGVGKT).

This sequence belongs to the ATPase alpha/beta chains family. As to quaternary structure, F-type ATPases have 2 components, CF(1) - the catalytic core - and CF(0) - the membrane proton channel. CF(1) has five subunits: alpha(3), beta(3), gamma(1), delta(1), epsilon(1). CF(0) has three main subunits: a(1), b(2) and c(9-12). The alpha and beta chains form an alternating ring which encloses part of the gamma chain. CF(1) is attached to CF(0) by a central stalk formed by the gamma and epsilon chains, while a peripheral stalk is formed by the delta and b chains.

The protein localises to the cell membrane. It catalyses the reaction ATP + H2O + 4 H(+)(in) = ADP + phosphate + 5 H(+)(out). Produces ATP from ADP in the presence of a proton gradient across the membrane. The catalytic sites are hosted primarily by the beta subunits. In Bifidobacterium adolescentis (strain ATCC 15703 / DSM 20083 / NCTC 11814 / E194a), this protein is ATP synthase subunit beta.